A 393-amino-acid polypeptide reads, in one-letter code: Squamosa promoter-binding-like protein 11 (393 aa).

Residues 74–96 (QSTSINSSSPEAKRCKLASESSP) form a disordered region. The segment at 172-249 (VPRCQIDGCE…SHHNARRRKP (78 aa)) adopts an SBP-type zinc-finger fold. Residues Cys-175, Cys-180, Cys-197, His-200, Cys-216, Cys-219, His-223, and Cys-235 each contribute to the Zn(2+) site. Residues 232–248 (KRSCRKRLSHHNARRRK) carry the Bipartite nuclear localization signal motif.

The cofactor is Zn(2+).

It localises to the nucleus. In terms of biological role, trans-acting factor that binds specifically to the consensus nucleotide sequence 5'-TNCGTACAA-3'. In Arabidopsis thaliana (Mouse-ear cress), this protein is Squamosa promoter-binding-like protein 11 (SPL11).